A 255-amino-acid polypeptide reads, in one-letter code: Hydroxyacylglutathione hydrolase (255 aa).

7 residues coordinate Zn(2+): His-55, His-57, Asp-59, His-60, His-111, Asp-131, and His-169.

The protein belongs to the metallo-beta-lactamase superfamily. Glyoxalase II family. As to quaternary structure, monomer. Zn(2+) is required as a cofactor.

The enzyme catalyses an S-(2-hydroxyacyl)glutathione + H2O = a 2-hydroxy carboxylate + glutathione + H(+). Its pathway is secondary metabolite metabolism; methylglyoxal degradation; (R)-lactate from methylglyoxal: step 2/2. Its function is as follows. Thiolesterase that catalyzes the hydrolysis of S-D-lactoyl-glutathione to form glutathione and D-lactic acid. In Chromohalobacter salexigens (strain ATCC BAA-138 / DSM 3043 / CIP 106854 / NCIMB 13768 / 1H11), this protein is Hydroxyacylglutathione hydrolase.